Reading from the N-terminus, the 484-residue chain is Probable cytochrome P450 316a1 (484 aa).

Cysteine 433 is a binding site for heme.

This sequence belongs to the cytochrome P450 family. Heme serves as cofactor.

It localises to the endoplasmic reticulum membrane. It is found in the microsome membrane. May be involved in the metabolism of insect hormones and in the breakdown of synthetic insecticides. The protein is Probable cytochrome P450 316a1 (Cyp316a1) of Drosophila melanogaster (Fruit fly).